Consider the following 231-residue polypeptide: Urease accessory protein UreE (231 aa).

The segment at 185–231 is disordered; sequence VASPLDEPHGSGLHIHGIHSHEEGHSHGDHDHDHSHSHGDHDHDHKH. Residues 203 to 231 are compositionally biased toward basic and acidic residues; the sequence is HSHEEGHSHGDHDHDHSHSHGDHDHDHKH.

The protein belongs to the UreE family.

The protein localises to the cytoplasm. Involved in urease metallocenter assembly. Binds nickel. Probably functions as a nickel donor during metallocenter assembly. The sequence is that of Urease accessory protein UreE from Yersinia pestis bv. Antiqua (strain Antiqua).